Consider the following 2457-residue polypeptide: Highly reducing polyketide synthase ACTTS3 (2457 aa).

Positions 5–435 (REPIAVIGSA…GTNAHVILES (431 aa)) constitute a Ketosynthase family 3 (KS3) domain. Active-site for beta-ketoacyl synthase activity residues include C179, H316, and H356. The interval 545-856 (RVLGIFTGQG…VMEAVLESSP (312 aa)) is malonyl-CoA:ACP transacylase (MAT) domain. S641 (for malonyltransferase activity) is an active-site residue. The N-terminal hotdog fold stretch occupies residues 938-1078 (HELLGRRTAD…GRIIIHLGSG (141 aa)). Residues 938 to 1244 (HELLGRRTAD…LSLKSVAEPT (307 aa)) form a dehydratase (DH) domain region. A PKS/mFAS DH domain is found at 938-1246 (HELLGRRTAD…LKSVAEPTEE (309 aa)). H970 (proton acceptor; for dehydratase activity) is an active-site residue. Residues 1091–1246 (TDLSPVDLDR…LKSVAEPTEE (156 aa)) form a C-terminal hotdog fold region. The active-site Proton donor; for dehydratase activity is D1152. Residues 1399-1587 (ETMNNCIARA…DVFYDFPDRS (189 aa)) form a methyltransferase (CMet) domain region. The segment at 2085–2281 (FLPDKTYLMI…SDRHIENHLR (197 aa)) is ketoreductase (KR) domain. Residues 2374 to 2451 (DVTTVFQQAF…EISIDATKKY (78 aa)) enclose the Carrier domain. S2411 carries the post-translational modification O-(pantetheine 4'-phosphoryl)serine.

Pantetheine 4'-phosphate is required as a cofactor.

It participates in mycotoxin biosynthesis. Functionally, highly reducing polyketide synthase; part of the gene clusters that mediate the biosynthesis of the host-selective toxins (HSTs) ACT-toxins responsible for brown spot of tangerine disease by the tangerine pathotype which affects tangerines and mandarins. ACT-toxins consist of three moieties, 9,10-epoxy-8-hydroxy-9-methyl-decatrienoic acid (EDA), valine and a polyketide. ACT-toxin I is toxic to both citrus and pear; toxin II the 5''-deoxy derivative of ACT-toxin I, is highly toxic to pear and slightly toxic to citrus. On cellular level, ACT-toxins affect plasma membrane of susceptible cells and cause a sudden increase in loss of K(+) after a few minutes of toxin treatment. The acyl-CoA ligase ACTT1, the hydrolase ACTT2, the enoyl-CoA hydratases ACTT3 and ACTT6, and the acyl-CoA synthetase ACTT5 are all involved in the biosynthesis of the AK-, AF- and ACT-toxin common 9,10-epoxy-8-hydroxy-9-methyl-decatrienoic acid (EDA) structural moiety. The exact role of each enzyme, and of additional enzymes identified within the AF-toxin clusters have still to be determined. On the other hand, ACTTS1 to ACTTS4 are specific to the tangerine pathotype. The function of ACTTS3 is to elongate the polyketide chain portion of ACT-toxin that is unique to this toxin. The enoyl-reductase ACTTS2 might complement the missing enoyl-reductase (ER) domain in ACTTS3 in the synthesis of the polyketide portion of ACT-toxin. The roles of the nonribosomal peptide synthetases-related proteins ACTTS1 and ACTTS4 have also still not been elucidated. This chain is Highly reducing polyketide synthase ACTTS3, found in Alternaria alternata (Alternaria rot fungus).